Reading from the N-terminus, the 249-residue chain is Pleckstrin homology domain-containing family F member 2 (249 aa).

Serine 16 carries the post-translational modification Phosphoserine. The 97-residue stretch at 35 to 131 (VLIGEGVLTK…WMNHINKCVT (97 aa)) folds into the PH domain. Residue lysine 44 is modified to N6-acetyllysine. The FYVE-type zinc finger occupies 152-212 (DSEATVCMRC…ICDFCYDLLS (61 aa)). Zn(2+) is bound by residues cysteine 158, cysteine 161, cysteine 175, cysteine 178, cysteine 183, cysteine 186, cysteine 204, and cysteine 207. Residues 221–233 (PTRSDSYSQSLKS) show a composition bias toward polar residues. A disordered region spans residues 221-249 (PTRSDSYSQSLKSPLNDASDDDDDDDSSD). A compositionally biased stretch (acidic residues) spans 238–249 (ASDDDDDDDSSD). Serine 239 and serine 248 each carry phosphoserine.

As to quaternary structure, may interact with EEA1. Expressed in brain, stomach and thymus, as well as in kidney, spleen, and skeletal muscle. Also expressed in peripheral blood mononuclear cells and dendritic cells.

The protein localises to the early endosome membrane. It is found in the endoplasmic reticulum. May play a role in early endosome fusion upstream of RAB5, hence regulating receptor trafficking and fluid-phase transport. Enhances cellular sensitivity to TNF-induced apoptosis. The sequence is that of Pleckstrin homology domain-containing family F member 2 (Plekhf2) from Mus musculus (Mouse).